Reading from the N-terminus, the 730-residue chain is Catalase-peroxidase (730 aa).

Positions 1 to 21 (MTENKCPVTGKMSKATAGSGT) are disordered. Residues 95–218 (WHSAGTYRVG…LAAVQMGLIY (124 aa)) constitute a cross-link (tryptophyl-tyrosyl-methioninium (Trp-Tyr) (with M-244)). Residue His96 is the Proton acceptor of the active site. The segment at residues 218-244 (YVNPEGPNGNPDPLGSAHDVRETFARM) is a cross-link (tryptophyl-tyrosyl-methioninium (Tyr-Met) (with W-95)). His259 serves as a coordination point for heme b.

It belongs to the peroxidase family. Peroxidase/catalase subfamily. Homodimer or homotetramer. It depends on heme b as a cofactor. Post-translationally, formation of the three residue Trp-Tyr-Met cross-link is important for the catalase, but not the peroxidase activity of the enzyme.

The catalysed reaction is H2O2 + AH2 = A + 2 H2O. The enzyme catalyses 2 H2O2 = O2 + 2 H2O. Functionally, bifunctional enzyme with both catalase and broad-spectrum peroxidase activity. The chain is Catalase-peroxidase from Clostridium botulinum (strain Alaska E43 / Type E3).